Reading from the N-terminus, the 724-residue chain is Transcription factor dcp-66 (724 aa).

Composition is skewed to polar residues over residues 1-12 (MAQVQQVPSSPM) and 56-70 (GAST…QLSP). Disordered regions lie at residues 1 to 23 (MAQV…GNGL) and 55 to 129 (NGAS…KRRL). Residues 85–95 (AQEKIKLKDDI) show a composition bias toward basic and acidic residues. The segment covering 105 to 119 (DDDDMEDEELGDEIN) has biased composition (acidic residues). Positions 186-216 (EEQLRERLNMRREAENQLREEEAKLLVLRKM) form a coiled coil. 2 disordered regions span residues 328–361 (KELS…QITQ) and 523–590 (AAPA…QLQQ). Residues 332-358 (AAETNASASASPAVQQSQQAQQPQQAQ) show a composition bias toward low complexity. Composition is skewed to polar residues over residues 527-541 (TSQT…TVSS) and 551-564 (IPSS…TQAV). Positions 565-590 (KTSTPIHSTPKSSSSSAKKTAAQLQQ) are enriched in low complexity.

Expressed at low levels in excretory cell, pharynx, vulva, and posterior neurons in adults. Strongly expressed in the excretory cell and more weakly in the pharynx in larva. Embryonic expression in the excretory cell.

The protein localises to the nucleus. Functionally, transcription factor which binds to the 5'-CCATACATTA-3' motif found in the promoter region of pgp-12 and activates its expression in the excretory cell. This Caenorhabditis elegans protein is Transcription factor dcp-66.